The primary structure comprises 241 residues: Chloride intracellular channel protein 1 (241 aa).

A2 carries the N-acetylalanine modification. Residues 2-90 are required for insertion into the membrane; sequence AEEQPQVELF…EEFLEAVLCP (89 aa). The residue at position 13 (K13) is an N6-acetyllysine. Positions 24-27 match the G-site motif; the sequence is CPFS. C24 and C59 are disulfide-bonded. The helical transmembrane segment at 26–46 threads the bilayer; it reads FSQRLFMVLWLKGVTFNVTTV. The GST C-terminal domain occupies 93–233; sequence YPKLAALNPE…PDDEEIELAY (141 aa). K119 is subject to N6-acetyllysine. S121 carries the phosphoserine modification. K131 is subject to N6-acetyllysine. S156 and S211 each carry phosphoserine. Phosphotyrosine is present on Y233.

Belongs to the chloride channel CLIC family. Monomer. Homodimer (in vitro). Interacts with TRAPPC2. Dimerization requires a conformation change that leads to the exposure of a large hydrophobic surface. In vivo, this may lead to membrane insertion.

It is found in the nucleus. Its subcellular location is the nucleus membrane. The protein resides in the cytoplasm. It localises to the cell membrane. The protein localises to the endoplasmic reticulum. It catalyses the reaction L-dehydroascorbate + 2 glutathione = glutathione disulfide + L-ascorbate. The catalysed reaction is chloride(in) = chloride(out). It carries out the reaction iodide(out) = iodide(in). The enzyme catalyses thiocyanate(in) = thiocyanate(out). It catalyses the reaction nitrate(in) = nitrate(out). The catalysed reaction is bromide(in) = bromide(out). It carries out the reaction fluoride(in) = fluoride(out). Its function is as follows. In the soluble state, catalyzes glutaredoxin-like thiol disulfide exchange reactions with reduced glutathione as electron donor. Reduces selenite and dehydroascorbate and may act as an antioxidant during oxidative stress response. Can insert into membranes and form voltage-dependent multi-ion conductive channels. Membrane insertion seems to be redox-regulated and may occur only under oxidizing conditions. Involved in regulation of the cell cycle. The sequence is that of Chloride intracellular channel protein 1 (CLIC1) from Oryctolagus cuniculus (Rabbit).